Here is a 189-residue protein sequence, read N- to C-terminus: 3-isopropylmalate dehydratase small subunit (189 aa).

The protein belongs to the LeuD family. LeuD type 1 subfamily. In terms of assembly, heterodimer of LeuC and LeuD.

The catalysed reaction is (2R,3S)-3-isopropylmalate = (2S)-2-isopropylmalate. Its pathway is amino-acid biosynthesis; L-leucine biosynthesis; L-leucine from 3-methyl-2-oxobutanoate: step 2/4. In terms of biological role, catalyzes the isomerization between 2-isopropylmalate and 3-isopropylmalate, via the formation of 2-isopropylmaleate. This is 3-isopropylmalate dehydratase small subunit from Francisella tularensis subsp. holarctica (strain FTNF002-00 / FTA).